Here is a 126-residue protein sequence, read N- to C-terminus: Large ribosomal subunit protein eL32 (126 aa).

Belongs to the eukaryotic ribosomal protein eL32 family. Part of the 50S ribosomal subunit.

This Thermococcus kodakarensis (strain ATCC BAA-918 / JCM 12380 / KOD1) (Pyrococcus kodakaraensis (strain KOD1)) protein is Large ribosomal subunit protein eL32 (rpl32e).